We begin with the raw amino-acid sequence, 157 residues long: SsrA-binding protein (157 aa).

Residues 136–151 are compositionally biased toward basic and acidic residues; the sequence is KRETSAKRDWSREKQR. A disordered region spans residues 136–157; it reads KRETSAKRDWSREKQRLLKQNS.

The protein belongs to the SmpB family.

Its subcellular location is the cytoplasm. In terms of biological role, required for rescue of stalled ribosomes mediated by trans-translation. Binds to transfer-messenger RNA (tmRNA), required for stable association of tmRNA with ribosomes. tmRNA and SmpB together mimic tRNA shape, replacing the anticodon stem-loop with SmpB. tmRNA is encoded by the ssrA gene; the 2 termini fold to resemble tRNA(Ala) and it encodes a 'tag peptide', a short internal open reading frame. During trans-translation Ala-aminoacylated tmRNA acts like a tRNA, entering the A-site of stalled ribosomes, displacing the stalled mRNA. The ribosome then switches to translate the ORF on the tmRNA; the nascent peptide is terminated with the 'tag peptide' encoded by the tmRNA and targeted for degradation. The ribosome is freed to recommence translation, which seems to be the essential function of trans-translation. This is SsrA-binding protein from Cereibacter sphaeroides (strain ATCC 17029 / ATH 2.4.9) (Rhodobacter sphaeroides).